The following is a 138-amino-acid chain: Nucleoside diphosphate kinase (138 aa).

The ATP site is built by lysine 11, phenylalanine 59, arginine 87, threonine 93, arginine 104, and asparagine 114. Histidine 117 acts as the Pros-phosphohistidine intermediate in catalysis.

This sequence belongs to the NDK family. The cofactor is Mg(2+).

Its subcellular location is the cytoplasm. The enzyme catalyses a 2'-deoxyribonucleoside 5'-diphosphate + ATP = a 2'-deoxyribonucleoside 5'-triphosphate + ADP. The catalysed reaction is a ribonucleoside 5'-diphosphate + ATP = a ribonucleoside 5'-triphosphate + ADP. In terms of biological role, major role in the synthesis of nucleoside triphosphates other than ATP. The ATP gamma phosphate is transferred to the NDP beta phosphate via a ping-pong mechanism, using a phosphorylated active-site intermediate. This is Nucleoside diphosphate kinase from Saccharolobus islandicus (strain Y.N.15.51 / Yellowstone #2) (Sulfolobus islandicus).